Reading from the N-terminus, the 208-residue chain is Small ribosomal subunit protein uS4 (208 aa).

Residues 98–158 (SRLDNAVYRL…EKSRNMQVID (61 aa)) enclose the S4 RNA-binding domain.

Belongs to the universal ribosomal protein uS4 family. Part of the 30S ribosomal subunit. Contacts protein S5. The interaction surface between S4 and S5 is involved in control of translational fidelity.

Functionally, one of the primary rRNA binding proteins, it binds directly to 16S rRNA where it nucleates assembly of the body of the 30S subunit. With S5 and S12 plays an important role in translational accuracy. The chain is Small ribosomal subunit protein uS4 from Desulfosudis oleivorans (strain DSM 6200 / JCM 39069 / Hxd3) (Desulfococcus oleovorans).